Reading from the N-terminus, the 300-residue chain is Tegument protein VP22 (300 aa).

Residues 1 to 148 (MTSRRSVKSC…PARGRRPAQA (148 aa)) form a disordered region. 2 stretches are compositionally biased toward basic and acidic residues: residues 10-22 (CPRE…HEEL) and 50-61 (PRGEVRFLHYDE). A Nuclear localization signal motif is present at residues 163-166 (GRTK). Residues 174-267 (KKLHFSTAPP…LVNPDAAQDV (94 aa)) are interaction with gE. A Nuclear export signal motif is present at residues 232–244 (LNELLDLTTIRVT). Residues 269-292 (ATAAARGRPAGRAAATARAPARSA) show a composition bias toward low complexity. Positions 269 to 300 (ATAAARGRPAGRAAATARAPARSASRPRRPLE) are disordered.

The protein belongs to the alphaherpesvirinae VP22 tegument protein family. In terms of assembly, interacts with gE (via C-terminus); this interaction is necessary for the recruitment of VP22 to the Golgi and its packaging into virions. Interacts with gM (via C-terminus). Interacts with VP16; this interaction allows the formation of a tripartite complex composed of VP16, VP22 and UL41/VHS. Interacts with the capsid-binding protein UL16. Interacts with host CGAS. Post-translationally, highly phosphorylated in the host cell. Packaging is selective for underphosphorylated forms.

It localises to the virion tegument. Its subcellular location is the host cytoplasm. It is found in the host nucleus. The protein resides in the host Golgi apparatus. Functionally, tegument protein that plays different roles during the time course of infection. Participates in both the accumulation of viral mRNAs and viral protein translation at late time of infection. Modulates the RNase activity of the virion host shutoff protein UL41 probably to ensure necessary levels of key cellular mRNAs and proteins. Plays a role in microtubule reorganization that occurs after viral infection by stabilizing microtubule network. Plays a role in the inhibition of host innate immune system by targeting the CGAS enzymatic activity which is the principal cytosolic DNA sensor that detects invading viral DNA. Acts by mediating disruption of liquid-like droplets in which CGAS is activated, thereby preventing CGAS activity. In Homo sapiens (Human), this protein is Tegument protein VP22.